The chain runs to 583 residues: Protein translocase subunit SecD (583 aa).

A run of 6 helical transmembrane segments spans residues 7-27, 419-439, 446-468, 469-489, 511-531, and 538-558; these read FGVV…TLQW, LVWG…EAGV, LLNL…LSSI, AGMI…FERI, FWAI…LSVL, and GFAY…LFVS.

Belongs to the SecD/SecF family. SecD subfamily. In terms of assembly, forms a complex with SecF. Part of the essential Sec protein translocation apparatus which comprises SecA, SecYEG and auxiliary proteins SecDF. Other proteins may also be involved.

It is found in the cell inner membrane. Functionally, part of the Sec protein translocase complex. Interacts with the SecYEG preprotein conducting channel. SecDF uses the proton motive force (PMF) to complete protein translocation after the ATP-dependent function of SecA. The polypeptide is Protein translocase subunit SecD (Treponema pallidum (strain Nichols)).